The chain runs to 216 residues: Thioredoxin-like 2, chloroplastic (216 aa).

Residues 1 to 58 (MAEALLPLPRRLVVTASTPACSSASSSTSPSPHCLLSRANPRPPRLAAPSPPRHRRLK) constitute a chloroplast transit peptide. Over residues 19 to 40 (PACSSASSSTSPSPHCLLSRAN) the composition is skewed to low complexity. Positions 19–70 (PACSSASSSTSPSPHCLLSRANPRPPRLAAPSPPRHRRLKAHAAVSDKSEQP) are disordered. Residues 41–51 (PRPPRLAAPSP) are compositionally biased toward pro residues. The 128-residue stretch at 61–188 (AAVSDKSEQP…LKDAIAVHNT (128 aa)) folds into the Thioredoxin domain. Catalysis depends on nucleophile residues C111 and C114. C111 and C114 form a disulfide bridge.

Belongs to the thioredoxin family.

It localises to the plastid. The protein localises to the chloroplast. Functionally, probable thiol-disulfide oxidoreductase that may participate in various redox reactions. The chain is Thioredoxin-like 2, chloroplastic from Oryza sativa subsp. japonica (Rice).